Consider the following 65-residue polypeptide: Small ribosomal subunit protein eS31 (65 aa).

The Zn(2+) site is built by cysteine 36, cysteine 39, cysteine 55, and cysteine 58. Residues 36 to 58 form a C4-type zinc finger; the sequence is CPKCGSVMAFHREPVPRWHCGKC.

This sequence belongs to the eukaryotic ribosomal protein eS31 family. In terms of assembly, part of the 30S ribosomal subunit. Requires Zn(2+) as cofactor.

In Pyrobaculum calidifontis (strain DSM 21063 / JCM 11548 / VA1), this protein is Small ribosomal subunit protein eS31.